Here is a 219-residue protein sequence, read N- to C-terminus: Uracil-DNA glycosylase (219 aa).

Residue D61 is the Proton acceptor of the active site.

The protein belongs to the uracil-DNA glycosylase (UDG) superfamily. UNG family.

The protein resides in the cytoplasm. The enzyme catalyses Hydrolyzes single-stranded DNA or mismatched double-stranded DNA and polynucleotides, releasing free uracil.. Its function is as follows. Excises uracil residues from the DNA which can arise as a result of misincorporation of dUMP residues by DNA polymerase or due to deamination of cytosine. The sequence is that of Uracil-DNA glycosylase from Neisseria meningitidis serogroup A / serotype 4A (strain DSM 15465 / Z2491).